The chain runs to 5043 residues: Polyketide synthase PksJ (5043 aa).

Positions 141-481 (AVITDRGMHQ…ELPEIETSYT (341 aa)) are adenylation 1. Residues 590-667 (RVREEIQKHL…RLASYLSEHE (78 aa)) enclose the Carrier 1 domain. S627 carries the O-(pantetheine 4'-phosphoryl)serine modification. Residues 690–989 (QATFQPLSEV…NMLPIRSELN (300 aa)) are condensation. Residues 1181–1578 (TYRELDEKST…EHPGILECVV (398 aa)) are adenylation 2. The Carrier 2 domain maps to 1654–1729 (TSPKNIQDTV…NISQYITEQR (76 aa)). S1689 bears the O-(pantetheine 4'-phosphoryl)serine mark. In terms of domain architecture, Ketosynthase family 3 (KS3) 1 spans 1760-2186 (DDSVAIIGIS…GTNTHAIFEQ (427 aa)). Residues C1932, H2068, and H2108 each act as for beta-ketoacyl synthase 1 activity in the active site. The tract at residues 2374 to 2499 (HPLLHQNTSD…GSAELASAAE (126 aa)) is N-terminal hotdog fold. Positions 2374–2661 (HPLLHQNTSD…TRVLEGEVHT (288 aa)) constitute a PKS/mFAS DH domain. H2403 functions as the Proton acceptor; for dehydratase activity in the catalytic mechanism. A C-terminal hotdog fold region spans residues 2513–2661 (GKGKMSPDQF…TRVLEGEVHT (149 aa)). The active-site Proton donor; for dehydratase activity is the D2575. 2 consecutive Carrier domains span residues 3114–3188 (RKLE…VAAY) and 3212–3286 (SSLE…TVEH). O-(pantetheine 4'-phosphoryl)serine is present on residues S3148 and S3246. The disordered stretch occupies residues 3291–3314 (VQEREKPEGQEELQTKSSEAPKIT). A Ketosynthase family 3 (KS3) 2 domain is found at 3339–3779 (FEPVAIVGIS…GVNAHIVIEE (441 aa)). Active-site for beta-ketoacyl synthase 2 activity residues include C3511, H3646, and H3695. The stretch at 3839–3872 (REEMDERLACVAGTMQELEEKLQAFVDGKEETDE) forms a coiled coil. Residues 4459 to 4536 (GLLSETQSWL…RFADWLIGSY (78 aa)) enclose the Carrier 5 domain. S4496 carries the O-(pantetheine 4'-phosphoryl)serine modification. A Ketosynthase family 3 (KS3) 3 domain is found at 4588–4992 (AEGIAVVGLS…GTNAHVIVEA (405 aa)). C4743 serves as the catalytic For beta-ketoacyl synthase 3 activity.

Belongs to the ATP-dependent AMP-binding enzyme family. The cofactor is pantetheine 4'-phosphate.

It localises to the cytoplasm. It functions in the pathway antibiotic biosynthesis; bacillaene biosynthesis. Involved in some intermediate steps for the synthesis of the antibiotic polyketide bacillaene which is involved in secondary metabolism. This chain is Polyketide synthase PksJ (pksJ), found in Bacillus subtilis (strain 168).